Reading from the N-terminus, the 488-residue chain is Palmitoyltransferase ZDHHC14 (488 aa).

At 1-60 (MPPGGGGPMKDCEYSQISTHSSSPMESPHKKKKIAARRKWEVFPGRNKFFCNGRIMMARQ) the chain is on the cytoplasmic side. A helical membrane pass occupies residues 61-81 (TGVFYLTLVLILVTSGLFFAF). Residues 82–89 (DCPYLAVK) lie on the Lumenal side of the membrane. Residues 90 to 110 (ITPAIPAVAGILFFFVMGTLL) traverse the membrane as a helical segment. At 111–208 (RTSFSDPGVL…GNCVGKRNYR (98 aa)) the chain is on the cytoplasmic side. The 51-residue stretch at 165–215 (KYCFTCKIFRPPRASHCSLCDNCVERFDHHCPWVGNCVGKRNYRFFYMFIL) folds into the DHHC domain. Residue C195 is the S-palmitoyl cysteine intermediate of the active site. A helical membrane pass occupies residues 209 to 229 (FFYMFILSLSFLTVFIFAFVI). Residues 230–255 (THVILRSQQTGFLNALKDSPASVLEA) are Lumenal-facing. Residues 256–276 (VVCFFSVWSIVGLSGFHTYLI) form a helical membrane-spanning segment. Topologically, residues 277 to 488 (SSNQTTNEDI…VRGLVKLSSV (212 aa)) are cytoplasmic. S455 is subject to Phosphoserine.

The protein belongs to the DHHC palmitoyltransferase family. ERF2/ZDHHC9 subfamily. Widely expressed.

The protein resides in the endoplasmic reticulum membrane. Its subcellular location is the golgi apparatus. It is found in the golgi stack membrane. The enzyme catalyses L-cysteinyl-[protein] + hexadecanoyl-CoA = S-hexadecanoyl-L-cysteinyl-[protein] + CoA. Functionally, palmitoyltransferase that could catalyze the addition of palmitate onto various protein substrates. May have a palmitoyltransferase activity toward the beta-2 adrenergic receptor/ADRB2 and thereby regulate G protein-coupled receptor signaling. May play a role in cell differentiation and apoptosis. The sequence is that of Palmitoyltransferase ZDHHC14 from Homo sapiens (Human).